An 821-amino-acid chain; its full sequence is E3 ubiquitin-protein ligase RSP5 (821 aa).

In terms of domain architecture, C2 spans 1–112 (MGSNLPAQPN…QMGGDEMLTR (112 aa)). 2 stretches are compositionally biased toward polar residues: residues 133–144 (TNLSTPNPNQAN) and 188–201 (LNPQ…RPTS). 2 disordered regions span residues 133–239 (TNLS…GWER) and 255–359 (RTTT…YFVD). The segment covering 202–217 (QIAPPNGAPPIANGQG) has biased composition (low complexity). The WW 1 domain occupies 231-264 (GRLPAGWERREDNLGRTYYVDHNTRTTTWNRPSA). Over residues 255–272 (RTTTWNRPSANYNEQTQR) the composition is skewed to polar residues. A compositionally biased stretch (basic and acidic residues) spans 281–296 (LERRAHQNRMLPEDRT). The span at 297-312 (GASSPNLSETQPQAQT) shows a compositional bias: polar residues. Residues 320–339 (ASNSNVVSMMATGATTAGTG) show a composition bias toward low complexity. WW domains lie at 339 to 372 (GELP…DPRR) and 399 to 432 (GPLP…DPRL). Residues 488–821 (SASDLKKRLM…VEETLGFGQE (334 aa)) form the HECT domain. The active-site Glycyl thioester intermediate is the Cys-789.

This sequence belongs to the RSP5/NEDD4 family. In terms of assembly, interacts with apyA and creD.

It localises to the cytoplasm. The enzyme catalyses S-ubiquitinyl-[E2 ubiquitin-conjugating enzyme]-L-cysteine + [acceptor protein]-L-lysine = [E2 ubiquitin-conjugating enzyme]-L-cysteine + N(6)-ubiquitinyl-[acceptor protein]-L-lysine.. Its pathway is protein modification; protein ubiquitination. E3 ubiquitin-protein ligase which accepts ubiquitin from an E2 ubiquitin-conjugating enzyme in the form of a thioester and then directly transfers the ubiquitin to targeted substrates. Probably involved in the regulatory network controlling carbon source utilization. Ubiquitinates 'Lys-528' of the uric acid/xanthine transporter uapA at the cell membrane, leading to its internalization, sorting into the endosomal pathway to the vacuolar lumen where it is eventually degraded. This Emericella nidulans (strain FGSC A4 / ATCC 38163 / CBS 112.46 / NRRL 194 / M139) (Aspergillus nidulans) protein is E3 ubiquitin-protein ligase RSP5 (hulA).